We begin with the raw amino-acid sequence, 157 residues long: dCTP deaminase (157 aa).

DCTP-binding positions include 79 to 84, aspartate 95, glutamine 124, and tyrosine 138; that span reads RSSLAR.

Belongs to the dCTP deaminase family. In terms of assembly, homotrimer.

The catalysed reaction is dCTP + H2O + H(+) = dUTP + NH4(+). It participates in pyrimidine metabolism; dUMP biosynthesis; dUMP from dCTP (dUTP route): step 1/2. Functionally, catalyzes the deamination of dCTP to dUTP. The chain is dCTP deaminase from Thermococcus gammatolerans (strain DSM 15229 / JCM 11827 / EJ3).